Here is an 86-residue protein sequence, read N- to C-terminus: Large ribosomal subunit protein bL27 (86 aa).

The interval 1 to 24 (MAHKKGTGSTRNGRDSNSKRLGVK) is disordered.

The protein belongs to the bacterial ribosomal protein bL27 family.

This is Large ribosomal subunit protein bL27 from Prochlorococcus marinus (strain MIT 9301).